Consider the following 84-residue polypeptide: N.vectensis toxin 5 (84 aa).

Residues 1-21 (MNSLLKVAVVCLVMLVACSSG) form the signal peptide. Cystine bridges form between C45-C77, C47-C68, and C61-C78.

In terms of tissue distribution, expressed in ectodermal gland cells. In adult female tissues, highly transcribed in mesenteries (gametes-producing tissue) and slightly transcribed in tentacles, pharynx and physa.

Has toxic effects on zebrafish larvae. It causes contractile paralysis and twitching of the tail within 20 minutes, followed by death within 30 minutes. Does not show any toxicity when injected into arthropods (cherry shrimps or grass shrimps). The protein is N.vectensis toxin 5 of Nematostella vectensis (Starlet sea anemone).